We begin with the raw amino-acid sequence, 58 residues long: Small ribosomal subunit protein eS27 (58 aa).

Zn(2+) is bound by residues C10, C13, C29, and C32. Residues C10–C32 form a C4-type zinc finger.

It belongs to the eukaryotic ribosomal protein eS27 family. In terms of assembly, part of the 30S ribosomal subunit. Zn(2+) is required as a cofactor.

The chain is Small ribosomal subunit protein eS27 from Archaeoglobus fulgidus (strain ATCC 49558 / DSM 4304 / JCM 9628 / NBRC 100126 / VC-16).